The chain runs to 248 residues: 1-(5-phosphoribosyl)-5-[(5-phosphoribosylamino)methylideneamino] imidazole-4-carboxamide isomerase (248 aa).

Asp8 serves as the catalytic Proton acceptor. Catalysis depends on Asp127, which acts as the Proton donor.

Belongs to the HisA/HisF family.

The protein localises to the cytoplasm. It carries out the reaction 1-(5-phospho-beta-D-ribosyl)-5-[(5-phospho-beta-D-ribosylamino)methylideneamino]imidazole-4-carboxamide = 5-[(5-phospho-1-deoxy-D-ribulos-1-ylimino)methylamino]-1-(5-phospho-beta-D-ribosyl)imidazole-4-carboxamide. Its pathway is amino-acid biosynthesis; L-histidine biosynthesis; L-histidine from 5-phospho-alpha-D-ribose 1-diphosphate: step 4/9. This Thermotoga neapolitana (strain ATCC 49049 / DSM 4359 / NBRC 107923 / NS-E) protein is 1-(5-phosphoribosyl)-5-[(5-phosphoribosylamino)methylideneamino] imidazole-4-carboxamide isomerase.